The sequence spans 1645 residues: Outer membrane protein B (1645 aa).

Positions 1329 to 1352 (GALRYLSNSETADVGGSETGAVSS) are excised as a propeptide. Residues 1357–1645 (IDQVSYGVWA…QGTLKVRINF (289 aa)) enclose the Autotransporter domain.

Belongs to the rickettsiae OmpA/OmpB family.

The protein resides in the periplasm. Its subcellular location is the secreted. It is found in the cell surface. It localises to the cell outer membrane. The 120 kDa surface-exposed protein is a major structural protein which may play a role as a rickettsial virulence factor and/or immunogen during infection. Its function is as follows. The 32 kDa beta peptide may serve as a membrane anchor. The chain is Outer membrane protein B (ompB) from Rickettsia typhi (strain ATCC VR-144 / Wilmington).